We begin with the raw amino-acid sequence, 257 residues long: Putative hydro-lyase BceJ2315_40370 (257 aa).

It belongs to the D-glutamate cyclase family.

The protein is Putative hydro-lyase BceJ2315_40370 of Burkholderia cenocepacia (strain ATCC BAA-245 / DSM 16553 / LMG 16656 / NCTC 13227 / J2315 / CF5610) (Burkholderia cepacia (strain J2315)).